The following is a 1067-amino-acid chain: Mediator of RNA polymerase II transcription subunit 5 (1067 aa).

This sequence belongs to the Mediator complex subunit 5 family. In terms of assembly, component of the Mediator complex.

It is found in the nucleus. Component of the Mediator complex, a coactivator involved in the regulated transcription of nearly all RNA polymerase II-dependent genes. Mediator functions as a bridge to convey information from gene-specific regulatory proteins to the basal RNA polymerase II transcription machinery. Mediator is recruited to promoters by direct interactions with regulatory proteins and serves as a scaffold for the assembly of a functional preinitiation complex with RNA polymerase II and the general transcription factors. The polypeptide is Mediator of RNA polymerase II transcription subunit 5 (NUT1) (Kluyveromyces lactis (strain ATCC 8585 / CBS 2359 / DSM 70799 / NBRC 1267 / NRRL Y-1140 / WM37) (Yeast)).